A 222-amino-acid chain; its full sequence is Apoptosis regulator OPG045 (222 aa).

Belongs to the orthopoxvirus OPG045 family. As to quaternary structure, homodimer. Interacts with host pro-apoptotic protein BCL2L11 (via BH3 domain). Interacts with host NLRP1. Interacts with host BAK.

It is found in the host mitochondrion outer membrane. It localises to the host cytoplasm. Its function is as follows. Plays a role in evading host innate immune response by inhibiting host inflammasome activation. Interacts with and inhibits NLR-mediated interleukin-1 beta/IL1B production in infected cells. At the host mitochondria outer membrane, interacts with the BH3 domain of host BAK and prevents BAK from binding active BAX. In turn, host apoptosis is inhibited. In Homo sapiens (Human), this protein is Apoptosis regulator OPG045 (OPG045).